A 66-amino-acid polypeptide reads, in one-letter code: MSEEKLKAKVEQASGSLKEGAGKLTGDKELEAKGFVEKTIAKGKELADDAKEAVEGAVDAVKEKLK.

Over residues 1–10 the composition is skewed to basic and acidic residues; the sequence is MSEEKLKAKV. The segment at 1-22 is disordered; that stretch reads MSEEKLKAKVEQASGSLKEGAG.

It belongs to the UPF0337 (CsbD) family.

The chain is UPF0337 protein M6_Spy1542 from Streptococcus pyogenes serotype M6 (strain ATCC BAA-946 / MGAS10394).